We begin with the raw amino-acid sequence, 97 residues long: uncharacterized protein (97 aa).

This is an uncharacterized protein from Caenorhabditis elegans.